The chain runs to 1684 residues: GRIP and coiled-coil domain-containing protein 2 (1684 aa).

M1 is modified (N-acetylmethionine). The disordered stretch occupies residues 1–22 (MEDLVQDGVASPATPGTGKSKL). S11 is subject to Phosphoserine. T14 is modified (phosphothreonine). The stretch at 110-1618 (VTKMGDAHKE…REKSAANLEY (1509 aa)) forms a coiled coil. Phosphoserine is present on residues S236, S1483, and S1487. Residues 1475-1502 (LKNEPTTRSPVSSQQSLKNLRERRNTDL) are disordered. Positions 1477-1492 (NEPTTRSPVSSQQSLK) are enriched in polar residues. Residues 1574 to 1613 (HLNGLLRETEATNAILMEQIKLLKSEIRRLERNQEREKSA) form a mediates interaction with RAB6A region. The interval 1574–1684 (HLNGLLRETE…SYLHSWSGLR (111 aa)) is mediates interaction with RAB9A. Positions 1609–1659 (REKSAANLEYLKNVLLQFIFLKPGSERERLLPVINTMLQLSPEEKGKLAAV) constitute a GRIP domain.

Homodimer. Interacts (via GRIP domain) with RAB6A (preferentially in its GTP-bound form). May interact (RAB6A-dependent) with ARL1; according to PubMed:19703403, RAB6A and ARL1 are not involved in GCC2 Golgi localization as proposed by PubMed:18243103. Interacts (probably via GRIP domain) with RAB9A (preferentially in its GTP-bound form). Interacts with CLASP1 and CLASP2; recruits both proteins to membranes of the TGN. Interacts with STX16. Ubiquitous.

The protein resides in the cytoplasm. It is found in the golgi apparatus. Its subcellular location is the trans-Golgi network membrane. Functionally, golgin which probably tethers transport vesicles to the trans-Golgi network (TGN) and regulates vesicular transport between the endosomes and the Golgi. As a RAB9A effector it is involved in recycling of the mannose 6-phosphate receptor from the late endosomes to the TGN. May also play a role in transport between the recycling endosomes and the Golgi. Required for maintenance of the Golgi structure, it is involved in the biogenesis of noncentrosomal, Golgi-associated microtubules through recruitment of CLASP1 and CLASP2. The polypeptide is GRIP and coiled-coil domain-containing protein 2 (GCC2) (Homo sapiens (Human)).